The primary structure comprises 955 residues: MPSLSLSKLLRVGEGRMVKRLKHIADHVSSLSPEVEDLTDEQLRAKTEEFRARYRDGETLDELLPEAFAVAREASWRVIDQRHFHVQIMGGAALHFGNIAEMKTGEGKTLTCVLPAYLNAIAGDGVHVVTVNDYLAKRDSEWMGRVHRFLGLDTSVILSGMSPAERRAAYAADITYGTNNEFGFDYLRDNMTHSLDDLVQRGHNFAVVDEVDSILIDEARTPLIISGPADASSKWYAEFARIAPLLKRDVHYEVDIRKRTIGVHEAGVELVEDQLGIDNLYEAANSPLVSYLNNAIKAKELYTKDKDYIVRDGEVIIVDEFTGRVLVGRRYNEGMHQAIEAKEKVEIKAENQTLATITLQNYFRLYDKLSGMTGTAETEAAELHQIYNLGVIPIPTNRPMVRVDNGDLIYKTEEAKFHAVVDDVVERHEKGQPVLIGTTSVERSEYLSKQFTKRGVAHNVLNAKFHEQEAQIIAEAGRSGAVTVATNMAGRGTDVVLGGNPDIIADIALRKQGLDPVHTPDDYEAAWDDVLDQVKAEVKADADKVREAGGLYVLGTERHESRRIDNQLRGRSGRQGDPGESRFYLSLGDELMRRFNGAALESIMTRLNLPDDVPIEAKMVSKAIKSAQTQVEQQNFEIRKNVLKYDEVMNQQRTVIYNERRQILEGKDMEGQVEKMITDVVTAYVDGATAEGYVEDWDLEQLWTALKTLYPIGVDYKELVGDGDDETKDITAEELRETLLKDAHDAYARREAEIDGVAGEGSMRELERRVLLSVLDRKWREHLYEMDYLKEGIGLRAMAQRDPLVEYQREGFDMFGGMLEGLKEESVGFLFNLQVEAAAPQAAQAPGVSVTAASAAATASAAPAPAAPRPLPTQEAAQQAQGTAAPSALRAKGLDDGEPRGLTYSGPAEDGNAQLSRRGAAESDDSADAGTRRQRREAARSQSKGKKAPRTKRKR.

ATP-binding positions include glutamine 87, 105-109 (GEGKT), and aspartate 494. Residues 861–955 (AAPAPAAPRP…KKAPRTKRKR (95 aa)) form a disordered region. Residues 874–888 (QEAAQQAQGTAAPSA) show a composition bias toward low complexity. The segment covering 943 to 955 (SKGKKAPRTKRKR) has biased composition (basic residues).

Belongs to the SecA family. In terms of assembly, monomer and homodimer. Part of the essential Sec protein translocation apparatus which comprises SecA, SecYEG and auxiliary proteins SecDF. Other proteins may also be involved.

The protein localises to the cell membrane. Its subcellular location is the cytoplasm. It catalyses the reaction ATP + H2O + cellular proteinSide 1 = ADP + phosphate + cellular proteinSide 2.. In terms of biological role, part of the Sec protein translocase complex. Interacts with the SecYEG preprotein conducting channel. Has a central role in coupling the hydrolysis of ATP to the transfer of proteins into and across the cell membrane, serving as an ATP-driven molecular motor driving the stepwise translocation of polypeptide chains across the membrane. The sequence is that of Protein translocase subunit SecA from Rhodococcus opacus (strain B4).